Here is a 235-residue protein sequence, read N- to C-terminus: 2-C-methyl-D-erythritol 4-phosphate cytidylyltransferase (235 aa).

This sequence belongs to the IspD/TarI cytidylyltransferase family. IspD subfamily.

The catalysed reaction is 2-C-methyl-D-erythritol 4-phosphate + CTP + H(+) = 4-CDP-2-C-methyl-D-erythritol + diphosphate. It participates in isoprenoid biosynthesis; isopentenyl diphosphate biosynthesis via DXP pathway; isopentenyl diphosphate from 1-deoxy-D-xylulose 5-phosphate: step 2/6. In terms of biological role, catalyzes the formation of 4-diphosphocytidyl-2-C-methyl-D-erythritol from CTP and 2-C-methyl-D-erythritol 4-phosphate (MEP). In Ectopseudomonas mendocina (strain ymp) (Pseudomonas mendocina), this protein is 2-C-methyl-D-erythritol 4-phosphate cytidylyltransferase.